Here is a 737-residue protein sequence, read N- to C-terminus: MSNPKQEQHLSQDLLRIITATHHDPFEVLGRHSLPVPTATADTLVRVYLPGARSAELVINRQNRQIAPLNRLPGTDFFEWYGLGQQLPVHYQIEWYDRHNQHRVHYDPYAFAPQLGELDMHLFAEGQHWNIYNLLGAHPRQVDGINGVLFATWAPNAERISVVGNFNDWDGRHHPMRVRGSSGLWELFIPGVQPGDLYKFEIRNRQTGAVFLKSDPYGQSFEHRPSTSSIITADSAFAWQDADWMEHRAHWDWQASPLSIYEVHLGSWRRGWAGEFLSYRELAHQLADYVKYMGFTHVEILPVSEHPLDDSWGYQTTGYYAPTSRFGSPDDFRYFVDHLHQQGIGIILDWVPAHFPKDAHALARFDGSALYEHEDPRLGEHRDWGTLIYNYGRSEVRNFLLANALFWLKEYHIDGLRVDAVASMLHLDYSRQPGEWIPNIHGGNENLEAMTFLQQLNAICHGQHSGALVIAEESTAWPQVTRPTWVGGLGFSMKWNMGWMHDTLEYMSREPVHRQYHHNQLTFGMMYAFTENFQLPFSHDEVVHGKGSMINKMPGDDWQKFANLRLLYTYLYTYPGSKLLFMGGEFAQWSEWAHGRSLDWHLLDYGPHQGVQSAVKDLNHLYRQVPSLYQRNFRGDGFEWIDCHDSTQSIISYIRSSDSEFTLVILNFTPVPRYNYRIGVPVAGQYQEVFNSDSQFYGGSNLGNANPLYTQPVPWMNHGQSLEVTLPPLGGLLLKLA.

The Nucleophile role is filled by D419. Catalysis depends on E472, which acts as the Proton donor.

It belongs to the glycosyl hydrolase 13 family. GlgB subfamily. As to quaternary structure, monomer.

The catalysed reaction is Transfers a segment of a (1-&gt;4)-alpha-D-glucan chain to a primary hydroxy group in a similar glucan chain.. The protein operates within glycan biosynthesis; glycogen biosynthesis. Functionally, catalyzes the formation of the alpha-1,6-glucosidic linkages in glycogen by scission of a 1,4-alpha-linked oligosaccharide from growing alpha-1,4-glucan chains and the subsequent attachment of the oligosaccharide to the alpha-1,6 position. This chain is 1,4-alpha-glucan branching enzyme GlgB, found in Cellvibrio japonicus (strain Ueda107) (Pseudomonas fluorescens subsp. cellulosa).